The sequence spans 281 residues: Ermin (281 aa).

Composition is skewed to polar residues over residues 1–12, 21–31, and 135–147; these read MTDTPETLSGTE, NGQQPSSQTRQ, and AQQQ…DAST. Disordered regions lie at residues 1 to 80, 110 to 147, and 167 to 248; these read MTDT…KILN, REGH…DAST, and KCDE…GDIA. Acidic residues predominate over residues 169–197; sequence DEEEEEEEEVWNEEINEEDVDECAEEEDE. The segment covering 198 to 223 has biased composition (basic and acidic residues); sequence VRVIEFKRKHREGSPLKEESLAREDS. Ser-211, Ser-223, Ser-227, and Ser-230 each carry phosphoserine. Position 234 is a phosphothreonine (Thr-234). Residues 262-281 are binds actin; it reads KIRKGNTKQRIDEFESMMHL.

In terms of assembly, binds actin. In terms of tissue distribution, brain and spinal cord. Exclusively expressed by the oligodendrocytes. Appears at a late stage during myelination, and in the mature nerves, it is localized to the outer cytoplasmic lip of the myelin sheath and the paranodal loops.

The protein localises to the cytoplasm. It is found in the cytoskeleton. In terms of biological role, plays a role in cytoskeletal rearrangements during the late wrapping and/or compaction phases of myelinogenesis as well as in maintenance and stability of myelin sheath in the adult. May play an important role in late-stage oligodendroglia maturation, myelin/Ranvier node formation during CNS development, and in the maintenance and plasticity of related structures in the mature CNS. The protein is Ermin (Ermn) of Mus musculus (Mouse).